The sequence spans 546 residues: Acyl-CoA ligase oryP (546 aa).

Residues 166–174 (TSGTTGAPK), 300–305 (QFWLNL), and Arg403 contribute to the ATP site. Residues 412–414 (WDH) and 482–484 (LLR) each bind CoA. Lys499 is an ATP binding site.

Belongs to the ATP-dependent AMP-binding enzyme family.

The protein operates within secondary metabolite biosynthesis. Functionally, acyl-CoA ligase; part of the gene cluster that mediates the biosynthesis of oryzines, natural products with an unusual maleidride backbone. The two subunits of the fungal fatty acid synthase oryfasA and oryfasB probably form octenoic acid. This fatty acid is most likely activated by the acyl-CoA ligase oryP to give octenyl-CoA before the citrate synthase-like protein oryE catalyzes condensation with oxaloacetate to form tricarboxylic acid. The next steps of the pathways are conjectural, but a favorite possible route has been proposed, beginning with decarboxylation and concomitant dehydration by the decarboxylase oryM, followed by tautomerization, which may lead to the production of a diene intermediate. Reduction of this diene intermediate could give the known metabolite piliformic acid. On the pathway to oryzine B and oryzine A, however, hydroxylation of the diene by the alpha-ketoglutarate-dependent dioxygenase oryG and lactonisation by the lactonohydrolases oryH or oryL could give oryzine B directly. Finally, enoyl reduction by the dehydrogenase oryD would then convert oryzine B into oryzine A. The sequence is that of Acyl-CoA ligase oryP from Aspergillus oryzae (strain ATCC 42149 / RIB 40) (Yellow koji mold).